Here is a 1169-residue protein sequence, read N- to C-terminus: Protein MBD-R2 (1169 aa).

Residues 5-59 (CCVANCPSTSRLLEHNGVTYHSFPLDPIIRAIWIKNSRISLERQITKSVLVCSRH) form a THAP-type zinc finger. Disordered stretches follow at residues 99-122 (RALQHASVEGTTETPGNAQSSTND), 140-211 (SAER…KYSN), and 347-394 (AEEG…CAPQ). The span at 107-122 (EGTTETPGNAQSSTND) shows a compositional bias: polar residues. Positions 140 to 160 (SAERKATEEGKTGKAADDVKN) are enriched in basic and acidic residues. Residues 190–202 (PAPGSASSSNSPL) show a composition bias toward low complexity. Residues 353–363 (KSPTPVGTPVS) are compositionally biased toward polar residues. The MBD domain occupies 445–514 (KPTVIVQDWR…DVYDFSIHRR (70 aa)). A disordered region spans residues 527–565 (GYNPQPPPKPRPMDVSMNSTLDQSITSQHSLPSTPMPVK). The span at 542-559 (SMNSTLDQSITSQHSLPS) shows a compositional bias: polar residues. Residues 640 to 665 (YVCPREDCAKTYRKEDFLLIHIRHYH) form a C2H2-type zinc finger. Positions 714–890 (QDLQQSRSFK…INAALAPPPA (177 aa)) are disordered. Positions 726-742 (SVSATATSSTPSDITPT) are enriched in low complexity. Polar residues predominate over residues 774–784 (PTQSFNPSLSR). Residues 798 to 810 (SGSRKSNRQRSQR) show a composition bias toward basic residues. Composition is skewed to polar residues over residues 853–862 (AATTPISSID) and 869–881 (SVSTPSSNDQTDI).

In terms of assembly, component of the non-specific lethal (NLS) histone acetyltransferase complex at least composed of mof, nls1, dgt1/NSL2, Rcd1/NSL3, Rcd5/MCRS2, MBD-R2 and wds.

It is found in the nucleus. The protein localises to the chromosome. Component of the non-specific lethal (NLS) complex, a multiprotein complex that promotes expression of housekeeping genes on X chromosome and autosomes. This is Protein MBD-R2 from Drosophila melanogaster (Fruit fly).